A 639-amino-acid chain; its full sequence is UvrABC system protein C (639 aa).

Positions 31–109 (EQAGVYRMYD…IKKYQPKYNI (79 aa)) constitute a GIY-YIG domain. Positions 218–253 (SAVIEQLVARMELASNELHFELAAKYRDQIVTLRKV) constitute a UVR domain.

Belongs to the UvrC family. In terms of assembly, interacts with UvrB in an incision complex.

The protein resides in the cytoplasm. Functionally, the UvrABC repair system catalyzes the recognition and processing of DNA lesions. UvrC both incises the 5' and 3' sides of the lesion. The N-terminal half is responsible for the 3' incision and the C-terminal half is responsible for the 5' incision. The protein is UvrABC system protein C of Colwellia psychrerythraea (strain 34H / ATCC BAA-681) (Vibrio psychroerythus).